The following is a 207-amino-acid chain: 3-isopropylmalate dehydratase small subunit (207 aa).

Belongs to the LeuD family. LeuD type 1 subfamily. As to quaternary structure, heterodimer of LeuC and LeuD.

It catalyses the reaction (2R,3S)-3-isopropylmalate = (2S)-2-isopropylmalate. It participates in amino-acid biosynthesis; L-leucine biosynthesis; L-leucine from 3-methyl-2-oxobutanoate: step 2/4. In terms of biological role, catalyzes the isomerization between 2-isopropylmalate and 3-isopropylmalate, via the formation of 2-isopropylmaleate. This is 3-isopropylmalate dehydratase small subunit (leuD) from Buchnera aphidicola subsp. Pterocomma populeum.